The chain runs to 312 residues: HPr kinase/phosphorylase (312 aa).

Residues histidine 139 and lysine 160 contribute to the active site. 154 to 161 (GSSGVGKS) provides a ligand contact to ATP. Residue serine 161 coordinates Mg(2+). Aspartate 178 acts as the Proton acceptor; for phosphorylation activity. Proton donor; for dephosphorylation activity in catalysis. The tract at residues 202 to 211 (LEIRGLGIIN) is important for the catalytic mechanism of both phosphorylation and dephosphorylation. Glutamate 203 contacts Mg(2+). Arginine 244 is a catalytic residue. Residues 265-270 (PVRPGR) are important for the catalytic mechanism of dephosphorylation.

It belongs to the HPrK/P family. Homohexamer. Requires Mg(2+) as cofactor.

It carries out the reaction [HPr protein]-L-serine + ATP = [HPr protein]-O-phospho-L-serine + ADP + H(+). It catalyses the reaction [HPr protein]-O-phospho-L-serine + phosphate + H(+) = [HPr protein]-L-serine + diphosphate. Its function is as follows. Catalyzes the ATP- as well as the pyrophosphate-dependent phosphorylation of a specific serine residue in HPr, a phosphocarrier protein of the phosphoenolpyruvate-dependent sugar phosphotransferase system (PTS). HprK/P also catalyzes the pyrophosphate-producing, inorganic phosphate-dependent dephosphorylation (phosphorolysis) of seryl-phosphorylated HPr (P-Ser-HPr). The two antagonistic activities of HprK/P are regulated by several intracellular metabolites, which change their concentration in response to the absence or presence of rapidly metabolisable carbon sources (glucose, fructose, etc.) in the growth medium. Therefore, by controlling the phosphorylation state of HPr, HPrK/P is a sensor enzyme that plays a major role in the regulation of carbon metabolism and sugar transport: it mediates carbon catabolite repression (CCR), and regulates PTS-catalyzed carbohydrate uptake and inducer exclusion. The chain is HPr kinase/phosphorylase from Listeria monocytogenes serotype 4b (strain CLIP80459).